We begin with the raw amino-acid sequence, 584 residues long: Beta-fructofuranosidase, insoluble isoenzyme CWINV1 (584 aa).

Residues 1–28 form the signal peptide; it reads MTKEVCSNIGLWLLLTLLIGNYVVNLEA. Residues 63 to 66, glutamine 82, tryptophan 90, and 125 to 126 each bind substrate; these read WMND and WS. Aspartate 66 is an active-site residue. Asparagine 159 and asparagine 186 each carry an N-linked (GlcNAc...) asparagine glycan. Residues 191 to 192, glutamate 246, and aspartate 282 contribute to the substrate site; that span reads RD. Residues asparagine 342 and asparagine 446 are each glycosylated (N-linked (GlcNAc...) asparagine). The cysteines at positions 442 and 491 are disulfide-linked.

It belongs to the glycosyl hydrolase 32 family. In terms of tissue distribution, expressed in seedlings, leaves, flowers, and seeds.

The protein localises to the secreted. Its subcellular location is the extracellular space. The protein resides in the apoplast. It localises to the cell wall. The catalysed reaction is Hydrolysis of terminal non-reducing beta-D-fructofuranoside residues in beta-D-fructofuranosides.. Beta-fructofuranosidase that can use sucrose and 1-kestose, and, to a lower extent, neokestose and levan, as substrates, but not inuline. The sequence is that of Beta-fructofuranosidase, insoluble isoenzyme CWINV1 (CWINV1) from Arabidopsis thaliana (Mouse-ear cress).